The primary structure comprises 89 residues: Small ribosomal subunit protein uS15 (89 aa).

It belongs to the universal ribosomal protein uS15 family. As to quaternary structure, part of the 30S ribosomal subunit. Forms a bridge to the 50S subunit in the 70S ribosome, contacting the 23S rRNA.

Its function is as follows. One of the primary rRNA binding proteins, it binds directly to 16S rRNA where it helps nucleate assembly of the platform of the 30S subunit by binding and bridging several RNA helices of the 16S rRNA. Forms an intersubunit bridge (bridge B4) with the 23S rRNA of the 50S subunit in the ribosome. This Exiguobacterium sibiricum (strain DSM 17290 / CCUG 55495 / CIP 109462 / JCM 13490 / 255-15) protein is Small ribosomal subunit protein uS15.